The following is a 1188-amino-acid chain: F-box only protein 38 (1188 aa).

The F-box domain occupies methionine 30 to aspartate 75. The segment at lysine 59–arginine 119 is interaction with KLF7. 3 short sequence motifs (nuclear export signal) span residues leucine 194 to valine 201, leucine 307 to isoleucine 316, and leucine 451 to leucine 460. Positions alanine 487–arginine 526 are disordered. Residues asparagine 491–histidine 509 are compositionally biased toward low complexity. Threonine 591 bears the Phosphothreonine mark. 3 positions are modified to phosphoserine: serine 598, serine 600, and serine 606. Disordered regions lie at residues arginine 620–glutamate 666, methionine 685–glycine 766, and arginine 787–aspartate 909. 2 stretches are compositionally biased toward basic and acidic residues: residues arginine 621–glycine 630 and methionine 685–aspartate 699. The segment covering serine 703 to serine 740 has biased composition (polar residues). Phosphoserine occurs at positions 736 and 740. Residues arginine 787 to serine 798 are compositionally biased toward basic and acidic residues. The segment covering serine 849–glutamate 861 has biased composition (polar residues). Basic residues predominate over residues threonine 889–threonine 900. Residues lysine 896–arginine 899 carry the Nuclear localization signal motif.

As to quaternary structure, part of the SCF (SKP1-CUL1-F-box) E3 ubiquitin-protein ligase complex SCF(FBXO38) composed of CUL1, SKP1, RBX1 and FBXO38. Interacts with KLF7. Interacts with PDCD1/PD-1.

It is found in the cytoplasm. The protein resides in the cytosol. It localises to the nucleus. It participates in protein modification; protein ubiquitination. Functionally, substrate recognition component of a SCF (SKP1-CUL1-F-box protein) E3 ubiquitin-protein ligase complex which mediates the ubiquitination and subsequent proteasomal degradation of PDCD1/PD-1, thereby regulating T-cells-mediated immunity. Required for anti-tumor activity of T-cells by promoting the degradation of PDCD1/PD-1; the PDCD1-mediated inhibitory pathway being exploited by tumors to attenuate anti-tumor immunity and facilitate tumor survival. May indirectly stimulate the activity of transcription factor KLF7, a regulator of neuronal differentiation, without promoting KLF7 ubiquitination. The chain is F-box only protein 38 from Homo sapiens (Human).